The sequence spans 270 residues: Thiamine thiazole synthase (270 aa).

NAD(+)-binding positions include Ala39, 58 to 59 (EQ), Gly66, and Leu130. Position 159 is a 2,3-didehydroalanine (Cys) (Cys159). Residue Asp161 coordinates NAD(+). Fe cation is bound by residues Asp161 and His176. Ile223 provides a ligand contact to NAD(+). Residue Arg233 participates in glycine binding.

It belongs to the THI4 family. Homooctamer; tetramer of dimers. Fe(2+) is required as a cofactor. Post-translationally, during the catalytic reaction, a sulfide is transferred from Cys-159 to a reaction intermediate, generating a dehydroalanine residue.

The enzyme catalyses [ADP-thiazole synthase]-L-cysteine + glycine + NAD(+) = [ADP-thiazole synthase]-dehydroalanine + ADP-5-ethyl-4-methylthiazole-2-carboxylate + nicotinamide + 3 H2O + 2 H(+). It participates in cofactor biosynthesis; thiamine diphosphate biosynthesis. Its function is as follows. Involved in biosynthesis of the thiamine precursor thiazole. Catalyzes the conversion of NAD and glycine to adenosine diphosphate 5-(2-hydroxyethyl)-4-methylthiazole-2-carboxylic acid (ADT), an adenylated thiazole intermediate. The reaction includes an iron-dependent sulfide transfer from a conserved cysteine residue of the protein to a thiazole intermediate. The enzyme can only undergo a single turnover, which suggests it is a suicide enzyme. This is Thiamine thiazole synthase from Aeropyrum pernix (strain ATCC 700893 / DSM 11879 / JCM 9820 / NBRC 100138 / K1).